The primary structure comprises 187 residues: Ribosome maturation factor RimM (187 aa).

A PRC barrel domain is found at 95 to 178 (DEDEFFYADL…GLVEDKDESL (84 aa)).

This sequence belongs to the RimM family. As to quaternary structure, binds ribosomal protein uS19.

It localises to the cytoplasm. Functionally, an accessory protein needed during the final step in the assembly of 30S ribosomal subunit, possibly for assembly of the head region. Essential for efficient processing of 16S rRNA. May be needed both before and after RbfA during the maturation of 16S rRNA. It has affinity for free ribosomal 30S subunits but not for 70S ribosomes. This is Ribosome maturation factor RimM from Sinorhizobium fredii (strain NBRC 101917 / NGR234).